We begin with the raw amino-acid sequence, 24 residues long: Ascaphin-7 (24 aa).

Expressed by the skin glands.

It localises to the secreted. In terms of biological role, antimicrobial peptide that shows higher potency against Gram-negative bacteria than against Gram-positive bacteria. Has a very week hemolytic activity. This chain is Ascaphin-7, found in Ascaphus truei (Coastal tailed frog).